The following is a 350-amino-acid chain: tRNA uridine(34) hydroxylase (350 aa).

Residues 146 to 240 (DDPDALFIDM…YARKAREQGL (95 aa)) form the Rhodanese domain. Cys200 (cysteine persulfide intermediate) is an active-site residue.

Belongs to the TrhO family.

The catalysed reaction is uridine(34) in tRNA + AH2 + O2 = 5-hydroxyuridine(34) in tRNA + A + H2O. Functionally, catalyzes oxygen-dependent 5-hydroxyuridine (ho5U) modification at position 34 in tRNAs. The sequence is that of tRNA uridine(34) hydroxylase from Escherichia fergusonii (strain ATCC 35469 / DSM 13698 / CCUG 18766 / IAM 14443 / JCM 21226 / LMG 7866 / NBRC 102419 / NCTC 12128 / CDC 0568-73).